The sequence spans 55 residues: Spermatid nuclear transition protein 1 (55 aa).

Residues 1-42 (MSTSRKLKSHGMRRSKSRSPHKGVKRGGSKRKYRKGNLKSRK) show a composition bias toward basic residues. The interval 1–55 (MSTSRKLKSHGMRRSKSRSPHKGVKRGGSKRKYRKGNLKSRKRGDDANRNYRSHL) is disordered. Residues Ser-9 and Ser-40 each carry the phosphoserine modification.

This sequence belongs to the nuclear transition protein 1 family. In terms of tissue distribution, expressed by spermatids (at protein level).

It is found in the nucleus. Its subcellular location is the chromosome. In terms of biological role, plays a key role in the replacement of histones to protamine in the elongating spermatids of mammals. In condensing spermatids, loaded onto the nucleosomes, where it promotes the recruitment and processing of protamines, which are responsible for histone eviction. The protein is Spermatid nuclear transition protein 1 (TNP1) of Homo sapiens (Human).